Consider the following 457-residue polypeptide: Probable ubiquitin carboxyl-terminal hydrolase 16 (457 aa).

A disordered region spans residues 34-97; sequence VSSPSVPEGT…DGANDFVDED (64 aa). Residues 45–67 are compositionally biased toward polar residues; it reads TVLNNPKQSTVSRKSFSAPTSPT. Serine 61 is subject to Phosphoserine. Threonine 64 bears the Phosphothreonine mark. Serine 65 bears the Phosphoserine mark. Positions 125–429 constitute a USP domain; sequence PGLVNLGNTC…QAYILQYKRK (305 aa). Cysteine 134 acts as the Nucleophile in catalysis. Catalysis depends on histidine 388, which acts as the Proton acceptor. The segment at 434-457 is disordered; it reads SKHKLNTENTVTKTSNKKRRKISF. Residues 448 to 457 are compositionally biased toward basic residues; the sequence is SNKKRRKISF.

This sequence belongs to the peptidase C19 family.

It carries out the reaction Thiol-dependent hydrolysis of ester, thioester, amide, peptide and isopeptide bonds formed by the C-terminal Gly of ubiquitin (a 76-residue protein attached to proteins as an intracellular targeting signal).. The chain is Probable ubiquitin carboxyl-terminal hydrolase 16 (ubp16) from Schizosaccharomyces pombe (strain 972 / ATCC 24843) (Fission yeast).